The sequence spans 260 residues: Pyridoxine 5'-phosphate synthase (260 aa).

Residues Asn-10 and Arg-21 each contribute to the 3-amino-2-oxopropyl phosphate site. His-46 acts as the Proton acceptor in catalysis. 1-deoxy-D-xylulose 5-phosphate-binding residues include Arg-48 and His-53. The active-site Proton acceptor is the Glu-76. Position 113 (Thr-113) interacts with 1-deoxy-D-xylulose 5-phosphate. Residue His-204 is the Proton donor of the active site. Residues Asp-205 and 227 to 228 (GH) each bind 3-amino-2-oxopropyl phosphate.

The protein belongs to the PNP synthase family. As to quaternary structure, homooctamer; tetramer of dimers.

Its subcellular location is the cytoplasm. It carries out the reaction 3-amino-2-oxopropyl phosphate + 1-deoxy-D-xylulose 5-phosphate = pyridoxine 5'-phosphate + phosphate + 2 H2O + H(+). It participates in cofactor biosynthesis; pyridoxine 5'-phosphate biosynthesis; pyridoxine 5'-phosphate from D-erythrose 4-phosphate: step 5/5. Functionally, catalyzes the complicated ring closure reaction between the two acyclic compounds 1-deoxy-D-xylulose-5-phosphate (DXP) and 3-amino-2-oxopropyl phosphate (1-amino-acetone-3-phosphate or AAP) to form pyridoxine 5'-phosphate (PNP) and inorganic phosphate. This is Pyridoxine 5'-phosphate synthase from Xylella fastidiosa (strain 9a5c).